The primary structure comprises 321 residues: 2,3,4,5-tetrahydropyridine-2,6-dicarboxylate N-succinyltransferase (321 aa).

Mg(2+) contacts are provided by Asp166 and Glu183. Glu199 functions as the Acyl-anhydride intermediate in the catalytic mechanism. Succinyl-CoA-binding positions include Arg201, Gly216, Ser219, Ala242, Glu257–Ala258, Gly265, Lys281, and Arg294–Ser297.

It belongs to the type 2 tetrahydrodipicolinate N-succinyltransferase family. As to quaternary structure, homotrimer.

It is found in the cytoplasm. It catalyses the reaction (S)-2,3,4,5-tetrahydrodipicolinate + succinyl-CoA + H2O = (S)-2-succinylamino-6-oxoheptanedioate + CoA. The protein operates within amino-acid biosynthesis; L-lysine biosynthesis via DAP pathway; LL-2,6-diaminopimelate from (S)-tetrahydrodipicolinate (succinylase route): step 1/3. In terms of biological role, catalyzes the conversion of the cyclic tetrahydrodipicolinate (THDP) into the acyclic N-succinyl-L-2-amino-6-oxopimelate using succinyl-CoA. This is 2,3,4,5-tetrahydropyridine-2,6-dicarboxylate N-succinyltransferase from Micrococcus luteus (strain ATCC 4698 / DSM 20030 / JCM 1464 / CCM 169 / CCUG 5858 / IAM 1056 / NBRC 3333 / NCIMB 9278 / NCTC 2665 / VKM Ac-2230) (Micrococcus lysodeikticus).